Here is a 691-residue protein sequence, read N- to C-terminus: Elongation factor G (691 aa).

One can recognise a tr-type G domain in the interval 8-283; that stretch reads KKVRNIGIAA…AVVAYLPAPD (276 aa). GTP contacts are provided by residues 17–24, 81–85, and 135–138; these read AHIDAGKT, DTPGH, and NKMD.

This sequence belongs to the TRAFAC class translation factor GTPase superfamily. Classic translation factor GTPase family. EF-G/EF-2 subfamily.

The protein localises to the cytoplasm. Catalyzes the GTP-dependent ribosomal translocation step during translation elongation. During this step, the ribosome changes from the pre-translocational (PRE) to the post-translocational (POST) state as the newly formed A-site-bound peptidyl-tRNA and P-site-bound deacylated tRNA move to the P and E sites, respectively. Catalyzes the coordinated movement of the two tRNA molecules, the mRNA and conformational changes in the ribosome. The polypeptide is Elongation factor G (Campylobacter jejuni subsp. jejuni serotype O:23/36 (strain 81-176)).